The following is a 614-amino-acid chain: tRNA uridine 5-carboxymethylaminomethyl modification enzyme MnmG (614 aa).

10–15 is an FAD binding site; that stretch reads GAGHAG. Residue 271–285 coordinates NAD(+); the sequence is GPRYCPSIEDKIVKF.

It belongs to the MnmG family. In terms of assembly, homodimer. Heterotetramer of two MnmE and two MnmG subunits. It depends on FAD as a cofactor.

It is found in the cytoplasm. Its function is as follows. NAD-binding protein involved in the addition of a carboxymethylaminomethyl (cmnm) group at the wobble position (U34) of certain tRNAs, forming tRNA-cmnm(5)s(2)U34. The protein is tRNA uridine 5-carboxymethylaminomethyl modification enzyme MnmG of Ureaplasma parvum serovar 3 (strain ATCC 27815 / 27 / NCTC 11736).